We begin with the raw amino-acid sequence, 285 residues long: Chromatin modification-related protein YNG2 (285 aa).

Disordered regions lie at residues 1 to 24 (MSFE…SNLK) and 155 to 201 (RTVA…GANF). Residues 8–24 (DPSSALEQATQDVSNLK) show a composition bias toward polar residues. Residues 10-36 (SSALEQATQDVSNLKSESRFLLEEIRA) are a coiled coil. A PHD-type zinc finger spans residues 224 to 273 (QLYCFCQSVSYGEMVACDGPNCKYEWFHYGCVNLDEPPKGQWYCPECRQE). Residues Cys227, Cys229, Cys240, Cys245, His251, Cys254, Cys267, and Cys270 each coordinate Zn(2+).

It belongs to the ING family. As to quaternary structure, interacts with H3K4me3 and to a lesser extent with H3K4me2. Component of the NuA4 histone acetyltransferase complex.

The protein localises to the nucleus. Its function is as follows. Component of the NuA4 histone acetyltransferase complex which is involved in transcriptional activation of selected genes principally by acetylation of nucleosomal histone H4 and H2A. The NuA4 complex is also involved in DNA repair. Involved in cell cycle progression and meiosis. The sequence is that of Chromatin modification-related protein YNG2 (YNG2) from Eremothecium gossypii (strain ATCC 10895 / CBS 109.51 / FGSC 9923 / NRRL Y-1056) (Yeast).